The following is a 233-amino-acid chain: tRNA (guanine-N(7)-)-methyltransferase (233 aa).

Residues 1-22 (MIDENHPMRAAGNFFGRRHGKP) form a disordered region. Residues Glu64, Glu89, Asp116, and Asp138 each coordinate S-adenosyl-L-methionine. Asp138 is a catalytic residue. Residues Lys142, Asp174, and 212–215 (TRYE) contribute to the substrate site.

This sequence belongs to the class I-like SAM-binding methyltransferase superfamily. TrmB family.

The enzyme catalyses guanosine(46) in tRNA + S-adenosyl-L-methionine = N(7)-methylguanosine(46) in tRNA + S-adenosyl-L-homocysteine. The protein operates within tRNA modification; N(7)-methylguanine-tRNA biosynthesis. Functionally, catalyzes the formation of N(7)-methylguanine at position 46 (m7G46) in tRNA. This chain is tRNA (guanine-N(7)-)-methyltransferase, found in Brucella melitensis biotype 1 (strain ATCC 23456 / CCUG 17765 / NCTC 10094 / 16M).